We begin with the raw amino-acid sequence, 237 residues long: 7-cyano-7-deazaguanine synthase (237 aa).

10–20 (FSGGQDSTTCL) contacts ATP. Zn(2+) is bound by residues C189, C198, C201, and C204.

Belongs to the QueC family. Zn(2+) is required as a cofactor.

It catalyses the reaction 7-carboxy-7-deazaguanine + NH4(+) + ATP = 7-cyano-7-deazaguanine + ADP + phosphate + H2O + H(+). Its pathway is purine metabolism; 7-cyano-7-deazaguanine biosynthesis. Functionally, catalyzes the ATP-dependent conversion of 7-carboxy-7-deazaguanine (CDG) to 7-cyano-7-deazaguanine (preQ(0)). The sequence is that of 7-cyano-7-deazaguanine synthase from Aeromonas salmonicida (strain A449).